We begin with the raw amino-acid sequence, 173 residues long: Large ribosomal subunit protein uL10 (173 aa).

This sequence belongs to the universal ribosomal protein uL10 family. As to quaternary structure, part of the ribosomal stalk of the 50S ribosomal subunit. The N-terminus interacts with L11 and the large rRNA to form the base of the stalk. The C-terminus forms an elongated spine to which L12 dimers bind in a sequential fashion forming a multimeric L10(L12)X complex.

Functionally, forms part of the ribosomal stalk, playing a central role in the interaction of the ribosome with GTP-bound translation factors. In Bifidobacterium animalis subsp. lactis (strain AD011), this protein is Large ribosomal subunit protein uL10.